The following is a 365-amino-acid chain: Flagellar P-ring protein (365 aa).

An N-terminal signal peptide occupies residues 1–22 (MSVRRFLVWILALTVGAAPVMA).

Belongs to the FlgI family. In terms of assembly, the basal body constitutes a major portion of the flagellar organelle and consists of four rings (L,P,S, and M) mounted on a central rod.

It localises to the periplasm. It is found in the bacterial flagellum basal body. Functionally, assembles around the rod to form the L-ring and probably protects the motor/basal body from shearing forces during rotation. The sequence is that of Flagellar P-ring protein from Marinobacter nauticus (strain ATCC 700491 / DSM 11845 / VT8) (Marinobacter aquaeolei).